A 443-amino-acid polypeptide reads, in one-letter code: Trigger factor (443 aa).

One can recognise a PPIase FKBP-type domain in the interval 165–250 (GDQVVMDFVG…IKEVKEPVAA (86 aa)).

Belongs to the FKBP-type PPIase family. Tig subfamily.

The protein resides in the cytoplasm. It catalyses the reaction [protein]-peptidylproline (omega=180) = [protein]-peptidylproline (omega=0). Involved in protein export. Acts as a chaperone by maintaining the newly synthesized protein in an open conformation. Functions as a peptidyl-prolyl cis-trans isomerase. The chain is Trigger factor from Ruegeria pomeroyi (strain ATCC 700808 / DSM 15171 / DSS-3) (Silicibacter pomeroyi).